We begin with the raw amino-acid sequence, 382 residues long: Beta-lactamase CMY-1 (382 aa).

A signal peptide spans 1–23 (MQQRQSILWGAVATLMWAGLAHA). Ser-88 acts as the Acyl-ester intermediate in catalysis. Residues Ser-88, Gln-144, Tyr-174, Asn-176, and Asn-363 each coordinate a beta-lactam.

Belongs to the class-C beta-lactamase family.

The catalysed reaction is a beta-lactam + H2O = a substituted beta-amino acid. Inhibited by the beta-lactamase-blocking agent sulbactam. Functionally, class C beta-lactamase which confers resistance to penicillins and cephalosporins. Has benzylpenicillin- and cefalotin-hydrolyzing activities. Has weak cefuroxime, cefotaxime, cefoxitin, imipenem and oxacillin-hydrolyzing activities. This is Beta-lactamase CMY-1 from Klebsiella pneumoniae.